The chain runs to 874 residues: Dynein regulatory complex subunit 7 (874 aa).

Residues 1–20 (MEVLREKVEEEEEAEREEAA) are disordered. Coiled coils occupy residues 1–67 (MEVL…SAEL) and 257–297 (RFEQ…DALH). Over residues 386–400 (TEEDDSGINDEDDVE) the composition is skewed to acidic residues. The disordered stretch occupies residues 386-410 (TEEDDSGINDEDDVENLGKEDEDKS). The span at 401 to 410 (NLGKEDEDKS) shows a compositional bias: basic and acidic residues.

This sequence belongs to the DRC7 family. In terms of assembly, component of the nexin-dynein regulatory complex (N-DRC). Interacts with TCTE1/DRC5. Interacts with DRC3 and GAS8/DRC4. Expressed in the testis.

It is found in the cell projection. The protein resides in the cilium. The protein localises to the flagellum. It localises to the cytoplasm. Its subcellular location is the cytoskeleton. It is found in the cilium axoneme. The protein resides in the flagellum axoneme. Functionally, component of the nexin-dynein regulatory complex (N-DRC) a key regulator of ciliary/flagellar motility which maintains the alignment and integrity of the distal axoneme and regulates microtubule sliding in motile axonemes. Involved in the regulation of flagellar motility. Essential for male fertility, sperm head morphogenesis and sperm flagellum formation. The protein is Dynein regulatory complex subunit 7 (DRC7) of Pan troglodytes (Chimpanzee).